The primary structure comprises 61 residues: U-stichotoxin-Hcr1b (61 aa).

The signal sequence occupies residues 1 to 19 (PILIFAFVMFAVMVNAKPS). Residues 20-31 (IDDAEMKREPKP) constitute a propeptide that is removed on maturation. 2 cysteine pairs are disulfide-bonded: Cys-38–Cys-49 and Cys-41–Cys-56.

It belongs to the Hau1a/HC18/HC19 family.

Its subcellular location is the secreted. It is found in the nematocyst. Toxin that is lethal to crab. Does not produce the typical symptoms associated with sodium channel toxins in crabs, suggesting that it likely does not act on sodium channels. This is U-stichotoxin-Hcr1b from Radianthus crispa (Leathery sea anemone).